A 253-amino-acid polypeptide reads, in one-letter code: Glutamate racemase (253 aa).

Substrate contacts are provided by residues 7-8 and 39-40; these read DS and YG. The active-site Proton donor/acceptor is Cys-70. 71–72 provides a ligand contact to substrate; sequence NT. Cys-180 acts as the Proton donor/acceptor in catalysis. Position 181–182 (181–182) interacts with substrate; it reads TH.

This sequence belongs to the aspartate/glutamate racemases family.

It carries out the reaction L-glutamate = D-glutamate. The protein operates within cell wall biogenesis; peptidoglycan biosynthesis. Its function is as follows. Provides the (R)-glutamate required for cell wall biosynthesis. The chain is Glutamate racemase from Halothermothrix orenii (strain H 168 / OCM 544 / DSM 9562).